Here is a 292-residue protein sequence, read N- to C-terminus: Diaminopimelate epimerase (292 aa).

3 residues coordinate substrate: Asn13, Gln46, and Asn66. Cys75 (proton donor) is an active-site residue. Residues 76-77 (GN), Asn166, Asn199, and 217-218 (ER) each bind substrate. Cys226 functions as the Proton acceptor in the catalytic mechanism. 227–228 (GT) serves as a coordination point for substrate.

It belongs to the diaminopimelate epimerase family. Homodimer.

The protein localises to the cytoplasm. The enzyme catalyses (2S,6S)-2,6-diaminopimelate = meso-2,6-diaminopimelate. Its pathway is amino-acid biosynthesis; L-lysine biosynthesis via DAP pathway; DL-2,6-diaminopimelate from LL-2,6-diaminopimelate: step 1/1. Catalyzes the stereoinversion of LL-2,6-diaminopimelate (L,L-DAP) to meso-diaminopimelate (meso-DAP), a precursor of L-lysine and an essential component of the bacterial peptidoglycan. This Ralstonia pickettii (strain 12J) protein is Diaminopimelate epimerase.